The chain runs to 328 residues: Carbonic anhydrase-related protein 10 (328 aa).

Residues 31–301 (GWWAYKEVVQ…LNNRCIRTNI (271 aa)) form the Alpha-carbonic anhydrase domain.

Belongs to the alpha-carbonic anhydrase family.

In terms of biological role, does not have a catalytic activity. The protein is Carbonic anhydrase-related protein 10 (CA10) of Macaca fascicularis (Crab-eating macaque).